The following is a 257-amino-acid chain: MAALNEFVSVVVSDGSRDAGLAMLLVSRPPTNALSRQVYREVIAAADELGRRDDVAAVILFGGHEIFSAGDDMPELRTLRGAEAETAARVRRDAIDAVAAIPKPTVAAITGYALGAGLTLALAADWRISGDNVKFGATEILAGLVPGGDALARLTRVAGASKAKELVFSGRFFDAEEALALGLIDEMVAPDDVYDAAAAWARRFLDGPRHALAAAKAGVDAVFELPRAERLAAEQRRYVEVFSAGQGGDAGADPHGG.

Belongs to the enoyl-CoA hydratase/isomerase family.

It catalyses the reaction a (3S)-3-hydroxyacyl-CoA = a (2E)-enoyl-CoA + H2O. The catalysed reaction is a 4-saturated-(3S)-3-hydroxyacyl-CoA = a (3E)-enoyl-CoA + H2O. In terms of biological role, could possibly oxidize fatty acids using specific components. In Mycolicibacterium paratuberculosis (strain ATCC BAA-968 / K-10) (Mycobacterium paratuberculosis), this protein is Probable enoyl-CoA hydratase echA17 (echA17).